A 968-amino-acid chain; its full sequence is Isoleucine--tRNA ligase (968 aa).

Positions Pro68 to His78 match the 'HIGH' region motif. Residue Glu582 participates in L-isoleucyl-5'-AMP binding. Positions Lys623–Ser627 match the 'KMSKS' region motif. Position 626 (Lys626) interacts with ATP. The Zn(2+) site is built by Cys936, Cys939, Cys956, and Cys959.

Belongs to the class-I aminoacyl-tRNA synthetase family. IleS type 1 subfamily. In terms of assembly, monomer. The cofactor is Zn(2+).

Its subcellular location is the cytoplasm. It carries out the reaction tRNA(Ile) + L-isoleucine + ATP = L-isoleucyl-tRNA(Ile) + AMP + diphosphate. In terms of biological role, catalyzes the attachment of isoleucine to tRNA(Ile). As IleRS can inadvertently accommodate and process structurally similar amino acids such as valine, to avoid such errors it has two additional distinct tRNA(Ile)-dependent editing activities. One activity is designated as 'pretransfer' editing and involves the hydrolysis of activated Val-AMP. The other activity is designated 'posttransfer' editing and involves deacylation of mischarged Val-tRNA(Ile). The chain is Isoleucine--tRNA ligase from Prochlorococcus marinus (strain MIT 9312).